A 242-amino-acid polypeptide reads, in one-letter code: MTSDINALKYKKVLLKVSGEALMGDKQFGHEYDVIKKIAGDIKEVIDLGVEVTIVVGGGNIYRGINAALVGMDRASADYIGMLATVINALTLQNVMESLNIYTRVLSAIPMMSVCEPYIRRKAKRHMEKKRVVIFAGGTGNPFCTTDSAAVLRAIEMNCDILLKATQVDGVYDSDPKKNPNAKKYFTISYKDVITNNLQVMDMAAIAVAQENKLPIRIFSIKDQGNFAKVIQDKGKYTTIEE.

16–19 (KVSG) is a binding site for ATP. Glycine 58 lines the UMP pocket. Glycine 59 and arginine 63 together coordinate ATP. UMP contacts are provided by residues aspartate 78 and 139 to 146 (TGNPFCTT). Positions 166, 167, 172, and 175 each coordinate ATP.

This sequence belongs to the UMP kinase family. As to quaternary structure, homohexamer.

The protein localises to the cytoplasm. The catalysed reaction is UMP + ATP = UDP + ADP. The protein operates within pyrimidine metabolism; CTP biosynthesis via de novo pathway; UDP from UMP (UMPK route): step 1/1. Inhibited by UTP. Functionally, catalyzes the reversible phosphorylation of UMP to UDP. The chain is Uridylate kinase from Rickettsia canadensis (strain McKiel).